A 1337-amino-acid chain; its full sequence is MKPAAREARLPPRSPGLRWALPLLLLLLRLGQILCAGGTPSPIPDPSVATVATGENGITQISSTAESFHKQNGTGTPQVETNTSEDGESSGANDSLRTPEQGSNGTDGASQKTPSSTGPSPVFDIKAVSISPTNVILTWKSNDTAASEYKYVVKHKMENEKTITVVHQPWCNITGLRPATSYVFSITPGIGNETWGDPRVIKVITEPIPVSDLRVALTGVRKAALSWSNGNGTASCRVLLESIGSHEELTQDSRLQVNISGLKPGVQYNINPYLLQSNKTKGDPLGTEGGLDASNTERSRAGSPTAPVHDESLVGPVDPSSGQQSRDTEVLLVGLEPGTRYNATVYSQAANGTEGQPQAIEFRTNAIQVFDVTAVNISATSLTLIWKVSDNESSSNYTYKIHVAGETDSSNLNVSEPRAVIPGLRSSTFYNITVCPVLGDIEGTPGFLQVHTPPVPVSDFRVTVVSTTEIGLAWSSHDAESFQMHITQEGAGNSRVEITTNQSIIIGGLFPGTKYCFEIVPKGPNGTEGASRTVCNRTVPSAVFDIHVVYVTTTEMWLDWKSPDGASEYVYHLVIESKHGSNHTSTYDKAITLQGLIPGTLYNITISPEVDHVWGDPNSTAQYTRPSNVSNIDVSTNTTAATLSWQNFDDASPTYSYCLLIEKAGNSSNATQVVTDIGITDATVTELIPGSSYTVEIFAQVGDGIKSLEPGRKSFCTDPASMASFDCEVVPKEPALVLKWTCPPGANAGFELEVSSGAWNNATHLESCSSENGTEYRTEVTYLNFSTSYNISITTVSCGKMAAPTRNTCTTGITDPPPPDGSPNITSVSHNSVKVKFSGFEASHGPIKAYAVILTTGEAGHPSADVLKYTYEDFKKGASDTYVTYLIRTEEKGRSQSLSEVLKYEIDVGNESTTLGYYNGKLEPLGSYRACVAGFTNITFHPQNKGLIDGAESYVSFSRYSDAVSLPQDPGVICGAVFGCIFGALVIVTVGGFIFWRKKRKDAKNNEVSFSQIKPKKSKLIRVENFEAYFKKQQADSNCGFAEEYEDLKLVGISQPKYAAELAENRGKNRYNNVLPYDISRVKLSVQTHSTDDYINANYMPGYHSKKDFIATQGPLPNTLKDFWRMVWEKNVYAIIMLTKCVEQGRTKCEEYWPSKQAQDYGDITVAMTSEIVLPEWTIRDFTVKNIQTSESHPLRQFHFTSWPDHGVPDTTDLLINFRYLVRDYMKQSPPESPILVHCSAGVGRTGTFIAIDRLIYQIENENTVDVYGIVYDLRMHRPLMVQTEDQYVFLNQCVLDIVRSQKDSKVDLIYQNTTAMTIYENLAPVTTFGKTNGYIA.

An N-terminal signal peptide occupies residues 1–35 (MKPAAREARLPPRSPGLRWALPLLLLLLRLGQILC). Over 36–975 (AGGTPSPIPD…LPQDPGVICG (940 aa)) the chain is Extracellular. 2 stretches are compositionally biased toward polar residues: residues 67 to 82 (SFHK…VETN) and 89 to 119 (SSGA…STGP). The interval 67-124 (SFHKQNGTGTPQVETNTSEDGESSGANDSLRTPEQGSNGTDGASQKTPSSTGPSPVFD) is disordered. N-linked (GlcNAc...) asparagine glycosylation is found at Asn72, Asn82, Asn93, Asn104, Asn142, Asn172, Asn192, Asn231, Asn258, Asn278, Asn342, Asn351, Asn376, Asn391, Asn396, Asn413, Asn431, Asn501, Asn525, Asn536, Asn582, Asn603, Asn618, Asn628, Asn637, Asn666, Asn669, Asn761, Asn772, Asn784, Asn790, Asn824, Asn910, and Asn937. Fibronectin type-III domains lie at 121–209 (PVFD…EPIP), 207–291 (PIPV…EGGL), 271–364 (NPYL…EFRT), 368–456 (QVFD…PPVP), 457–541 (VSDF…TVPS), 542–623 (AVFD…TAQY), 625–720 (RPSN…TDPA), 721–817 (SMAS…TDPP), and 816–902 (PPPP…SEVL). Residues 278 to 327 (NKTKGDPLGTEGGLDASNTERSRAGSPTAPVHDESLVGPVDPSSGQQSRD) form a disordered region. A helical transmembrane segment spans residues 976-996 (AVFGCIFGALVIVTVGGFIFW). Residues 997–1337 (RKKRKDAKNN…TFGKTNGYIA (341 aa)) lie on the Cytoplasmic side of the membrane. Ser1009 is modified (phosphoserine). The 258-residue stretch at 1041 to 1298 (FAEEYEDLKL…VFLNQCVLDI (258 aa)) folds into the Tyrosine-protein phosphatase domain. Substrate-binding positions include Asp1205, 1239 to 1245 (CSAGVGR), and Gln1283. The Phosphocysteine intermediate role is filled by Cys1239.

Belongs to the protein-tyrosine phosphatase family. Receptor class 3 subfamily. Monomer. Interacts with CTNNB1 (phosphorylated) and JUP (phosphorylated). Interacts with FLT3 (phosphorylated). Interacts with GAB1 and GRB2. N- and O-glycosylated. Post-translationally, N-glycosylated. In terms of tissue distribution, expressed in the promyelocytic cell line HL-60, the granulocyte-macrophage colony-stimulating factor-dependent leukemic cell line F-36P, and the IL3 and erythropoietin-dependent leukemic cell line F-36E. Expressed predominantly in epithelial cells and lymphocytes. Enhanced expression at high cell density. Expressed in the brain.

Its subcellular location is the cell membrane. It localises to the cell projection. The protein localises to the ruffle membrane. The protein resides in the cell junction. It is found in the secreted. Its subcellular location is the extracellular space. The catalysed reaction is O-phospho-L-tyrosyl-[protein] + H2O = L-tyrosyl-[protein] + phosphate. In terms of biological role, tyrosine phosphatase which dephosphorylates or contributes to the dephosphorylation of CTNND1, FLT3, PDGFRB, MET, KDR, LYN, SRC, MAPK1, MAPK3, EGFR, TJP1, OCLN, PIK3R1 and PIK3R2. Plays a role in cell adhesion, migration, proliferation and differentiation. Has a role in megakaryocytes and platelet formation. Involved in vascular development. Regulator of macrophage adhesion and spreading. Positively affects cell-matrix adhesion. Positive regulator of platelet activation and thrombosis. Negative regulator of cell proliferation. Negative regulator of PDGF-stimulated cell migration; through dephosphorylation of PDGFR. Positive regulator of endothelial cell survival, as well as of VEGF-induced SRC and AKT activation; through KDR dephosphorylation. Negative regulator of EGFR signaling pathway; through EGFR dephosphorylation. Enhances the barrier function of epithelial junctions during reassembly. Negatively regulates T-cell receptor (TCR) signaling. Upon T-cell TCR activation, it is up-regulated and excluded from the immunological synapses, while upon T-cell-antigen presenting cells (APC) disengagement, it is no longer excluded and can dephosphorylate PLCG1 and LAT to down-regulate prolongation of signaling. Functionally, activates angiogenesis and cell migration. Downregulates the expression of the endothelial adhesion molecules ICAM1 and VCAM1. The protein is Receptor-type tyrosine-protein phosphatase eta (PTPRJ) of Homo sapiens (Human).